The primary structure comprises 528 residues: Apolipoprotein N-acyltransferase (528 aa).

A run of 5 helical transmembrane segments spans residues 8-28, 69-89, 99-119, 178-198, and 203-223; these read IMLL…AVGA, AFWI…WWLG, FAWA…VFYG, VLGL…PALL, and GAKL…GYGA. Residues 241 to 490 form the CN hydrolase domain; that stretch reads VQPNIDQAAK…EGVENATFTL (250 aa). E285 serves as the catalytic Proton acceptor. K349 is an active-site residue. The active-site Nucleophile is C402.

Belongs to the CN hydrolase family. Apolipoprotein N-acyltransferase subfamily.

The protein localises to the cell inner membrane. It carries out the reaction N-terminal S-1,2-diacyl-sn-glyceryl-L-cysteinyl-[lipoprotein] + a glycerophospholipid = N-acyl-S-1,2-diacyl-sn-glyceryl-L-cysteinyl-[lipoprotein] + a 2-acyl-sn-glycero-3-phospholipid + H(+). The protein operates within protein modification; lipoprotein biosynthesis (N-acyl transfer). Its function is as follows. Catalyzes the phospholipid dependent N-acylation of the N-terminal cysteine of apolipoprotein, the last step in lipoprotein maturation. This chain is Apolipoprotein N-acyltransferase, found in Allorhizobium ampelinum (strain ATCC BAA-846 / DSM 112012 / S4) (Agrobacterium vitis (strain S4)).